The chain runs to 159 residues: 2-C-methyl-D-erythritol 2,4-cyclodiphosphate synthase (159 aa).

Asp9 and His11 together coordinate a divalent metal cation. 4-CDP-2-C-methyl-D-erythritol 2-phosphate contacts are provided by residues 9 to 11 (DVH) and 35 to 36 (HS). His43 provides a ligand contact to a divalent metal cation. 4-CDP-2-C-methyl-D-erythritol 2-phosphate is bound by residues 57–59 (DLG), 62–66 (FPDTD), 133–136 (TTTE), Phe140, and Arg143.

The protein belongs to the IspF family. Homotrimer. It depends on a divalent metal cation as a cofactor.

The catalysed reaction is 4-CDP-2-C-methyl-D-erythritol 2-phosphate = 2-C-methyl-D-erythritol 2,4-cyclic diphosphate + CMP. The protein operates within isoprenoid biosynthesis; isopentenyl diphosphate biosynthesis via DXP pathway; isopentenyl diphosphate from 1-deoxy-D-xylulose 5-phosphate: step 4/6. Its function is as follows. Involved in the biosynthesis of isopentenyl diphosphate (IPP) and dimethylallyl diphosphate (DMAPP), two major building blocks of isoprenoid compounds. Catalyzes the conversion of 4-diphosphocytidyl-2-C-methyl-D-erythritol 2-phosphate (CDP-ME2P) to 2-C-methyl-D-erythritol 2,4-cyclodiphosphate (ME-CPP) with a corresponding release of cytidine 5-monophosphate (CMP). In Shouchella clausii (strain KSM-K16) (Alkalihalobacillus clausii), this protein is 2-C-methyl-D-erythritol 2,4-cyclodiphosphate synthase.